The chain runs to 240 residues: Triosephosphate isomerase (240 aa).

Asparagine 9 to lysine 11 lines the substrate pocket. Histidine 94 functions as the Electrophile in the catalytic mechanism. Glutamate 163 (proton acceptor) is an active-site residue. Residues glycine 169, serine 202, and glycine 223–glycine 224 contribute to the substrate site.

It belongs to the triosephosphate isomerase family. As to quaternary structure, homodimer.

It localises to the cytoplasm. It carries out the reaction D-glyceraldehyde 3-phosphate = dihydroxyacetone phosphate. The protein operates within carbohydrate biosynthesis; gluconeogenesis. It participates in carbohydrate degradation; glycolysis; D-glyceraldehyde 3-phosphate from glycerone phosphate: step 1/1. Functionally, involved in the gluconeogenesis. Catalyzes stereospecifically the conversion of dihydroxyacetone phosphate (DHAP) to D-glyceraldehyde-3-phosphate (G3P). The polypeptide is Triosephosphate isomerase (Gloeobacter violaceus (strain ATCC 29082 / PCC 7421)).